The chain runs to 393 residues: Golgi membrane protein 1 (393 aa).

N-acetylmethionine is present on M1. Residues 1–12 (MMGLGNGRRSMK) lie on the Cytoplasmic side of the membrane. The helical; Signal-anchor for type II membrane protein transmembrane segment at 13–35 (SPPLILAALVACVIVLGFNYWIA) threads the bilayer. Topologically, residues 36–393 (SSRSVELQTR…QVGIHIPQQA (358 aa)) are lumenal. The stretch at 40 to 183 (VELQTRIVEL…IEEVIRKRNE (144 aa)) forms a coiled coil. 2 N-linked (GlcNAc...) asparagine glycosylation sites follow: N109 and N144. Disordered stretches follow at residues 180–247 (KRNE…QVQN) and 284–352 (HTQL…LAGN). Position 187 is a phosphoserine (S187). Composition is skewed to polar residues over residues 192 to 201 (ETNNQHQQAL) and 227 to 247 (NKSQIPAPNSESLGLKPQVQN). A glycan (N-linked (GlcNAc...) asparagine) is linked at N227. Residues 294-320 (RPEEDSQYPEREQLVIRDRQEQQRASE) are compositionally biased toward basic and acidic residues. Over residues 330 to 339 (DEYDMDENEA) the composition is skewed to acidic residues.

This sequence belongs to the GOLM family. As to quaternary structure, interacts with DYM. Post-translationally, glycosylated. Phosphorylation sites are present in the extracellular medium.

The protein localises to the golgi apparatus. It localises to the cis-Golgi network membrane. In terms of biological role, unknown. Cellular response protein to viral infection. The polypeptide is Golgi membrane protein 1 (Golm1) (Mus musculus (Mouse)).